Here is a 202-residue protein sequence, read N- to C-terminus: Nucleoside triphosphate pyrophosphatase (202 aa).

Asp-79 serves as the catalytic Proton acceptor.

The protein belongs to the Maf family. It depends on a divalent metal cation as a cofactor.

The protein resides in the cytoplasm. It catalyses the reaction a ribonucleoside 5'-triphosphate + H2O = a ribonucleoside 5'-phosphate + diphosphate + H(+). The catalysed reaction is a 2'-deoxyribonucleoside 5'-triphosphate + H2O = a 2'-deoxyribonucleoside 5'-phosphate + diphosphate + H(+). Its function is as follows. Nucleoside triphosphate pyrophosphatase. May have a dual role in cell division arrest and in preventing the incorporation of modified nucleotides into cellular nucleic acids. The sequence is that of Nucleoside triphosphate pyrophosphatase from Bradyrhizobium diazoefficiens (strain JCM 10833 / BCRC 13528 / IAM 13628 / NBRC 14792 / USDA 110).